Here is a 299-residue protein sequence, read N- to C-terminus: Protein charybde (299 aa).

The disordered stretch occupies residues 73–103 (LNTRPSATPPSAGGGGPLAGGGSVGMTTPKQ). Positions 84-96 (AGGGGPLAGGGSV) are enriched in gly residues.

Belongs to the DDIT4 family.

Its subcellular location is the cytoplasm. In terms of biological role, inhibits cell growth by regulating the Tor pathway upstream of the Tsc1-Tsc2 complex and downstream of Akt1. Acts as a cell death activator during head development. This Drosophila melanogaster (Fruit fly) protein is Protein charybde (chrb).